The sequence spans 191 residues: Orotate phosphoribosyltransferase (191 aa).

114–122 provides a ligand contact to 5-phospho-alpha-D-ribose 1-diphosphate; the sequence is EDVVTTGKS. Orotate is bound by residues T118 and R146.

The protein belongs to the purine/pyrimidine phosphoribosyltransferase family. PyrE subfamily. In terms of assembly, homodimer. It depends on Mg(2+) as a cofactor.

It catalyses the reaction orotidine 5'-phosphate + diphosphate = orotate + 5-phospho-alpha-D-ribose 1-diphosphate. The protein operates within pyrimidine metabolism; UMP biosynthesis via de novo pathway; UMP from orotate: step 1/2. Functionally, catalyzes the transfer of a ribosyl phosphate group from 5-phosphoribose 1-diphosphate to orotate, leading to the formation of orotidine monophosphate (OMP). The protein is Orotate phosphoribosyltransferase of Clostridium botulinum (strain Kyoto / Type A2).